Here is a 383-residue protein sequence, read N- to C-terminus: MGTQPSYSIHTLRAPPKAKQNQIPPSTTRRAVNVNKLGRQFRYPSVGMFTPEMAKRLAALVKMEKDLLRSYENVAMERKECANQLSYWGEDCDDDISDISDKLGVLLYEIGELEEHMVDRYDQYRVSLKTIRDIEASVQPTRVKKEKLLNSIYDVRSRDPESPKLITMEQELVREEAACLVAEAQLTNITRENFKRAFTLHIGTLLEHSEKVAILCGYAKKILDLLDDTPIVPGEPRPIYDGYNITRDYIVEAERELANWQNPFQTPEPLTDIDGLPSQSHYQTQFQASVVPRTDVINEPPRRYSHANGVTTSGTTHSYTSTGSKRYSQMGTEDYQPSFQPNILQSTQVVDNFEIGEEDDEEVGSQGVAETSMPSTSAQPIAA.

Ser162 is modified (phosphoserine). Disordered regions lie at residues 292–336 (PRTD…EDYQ) and 356–383 (GEEDDEEVGSQGVAETSMPSTSAQPIAA). Over residues 311–324 (TTSGTTHSYTSTGS) the composition is skewed to low complexity. Polar residues-rich tracts occupy residues 325–336 (KRYSQMGTEDYQ) and 368–383 (VAETSMPSTSAQPIAA).

In terms of processing, phosphorylated by ksg1 and ppk21. Phosphorylation is regulated by sphingolipid long chain bases (LCBs).

Functionally, negative regulator of cell wall integrity (CWI) in unstressed cells, probably by inhibiting protein kinase ksg1/ppk21 activity and regulating their downstream CWI pathways pck2-MAP kinase pathway and protein kinase gad8 pathway. Activity may be regulated by the transient increase of sphingolipid long chain bases (LCBs) during heat stress. This chain is Probable sphingolipid long chain base-responsive protein pil2 (pil2), found in Schizosaccharomyces pombe (strain 972 / ATCC 24843) (Fission yeast).